The sequence spans 498 residues: Cytochrome P450 monooxygenase apdB (498 aa).

Residues 20–40 traverse the membrane as a helical segment; the sequence is ASPQVFKLFVLILFVLLVLKI. C457 contributes to the heme binding site.

This sequence belongs to the cytochrome P450 family. The cofactor is heme.

The protein resides in the membrane. It participates in secondary metabolite biosynthesis. Its function is as follows. Cytochrome P450 monooxygenase; part of the gene cluster that mediates the biosynthesis of aspyridones. The polyketide-amino acid backbone preaspyridone A is first assembled by the PKS-NRPS hybrid apdA. The assembly of preaspyridone A is initiated by loading of malonyl-CoA onto apdA, followed by decarboxylation to yield the acetyl starter unit. The growing polyketide chain then elongates into a tetraketide. The adpA PKS module catalyzes three Claisen condensations, as well as beta-keto processing and methylation. Alpha-methylation step during polyketide synthesis is a prerequisite and a key checkpoint for chain transfer between PKS and NRPS modules. The downstream NRPS module contains the condensation (C), adenylation (A), and thiolation (T) domains and catalyzes the incorporation of tyrosine via the formation of the L-tyrosinyl-thioester and the amide linkage between L-tyrosinyl-thioester and the tetraketide. The bimodular assembly line is terminated with a reductase (R) domain that facilitates formation and release of the tetramic acid product. Because apdA lacks a designated enoylreductase (ER) domain, the required activity is provided the enoyl reductase apdC. ApdC appears to operate with different stereoselectivity in different PKS cycle. Combined with apdC, apdA is proposed to synthesize preaspyridone A via about 20 enzymatic steps. A number of oxidative steps performed successively by the cytochrome P450 monooxygenases apdE and apdB are required for the conversion of preaspyridone A to aspyridone A. The cytochrome P450 monooxygenase apdE is responsible for the oxidative dephenylation of preaspyridone A. Finally, the predicted FAD-dependent monooxygenase apdD and the acyl-CoA dehydrogenase apdG may be involved in the transformation of aspyridone A into aspyridone B. This is Cytochrome P450 monooxygenase apdB from Emericella nidulans (strain FGSC A4 / ATCC 38163 / CBS 112.46 / NRRL 194 / M139) (Aspergillus nidulans).